A 116-amino-acid chain; its full sequence is Large ribosomal subunit protein bL19 (116 aa).

Belongs to the bacterial ribosomal protein bL19 family.

Its function is as follows. This protein is located at the 30S-50S ribosomal subunit interface and may play a role in the structure and function of the aminoacyl-tRNA binding site. The chain is Large ribosomal subunit protein bL19 from Pseudomonas putida (strain ATCC 700007 / DSM 6899 / JCM 31910 / BCRC 17059 / LMG 24140 / F1).